A 223-amino-acid chain; its full sequence is Uracil-DNA glycosylase (223 aa).

D66 acts as the Proton acceptor in catalysis.

It belongs to the uracil-DNA glycosylase (UDG) superfamily. UNG family.

The protein resides in the cytoplasm. It catalyses the reaction Hydrolyzes single-stranded DNA or mismatched double-stranded DNA and polynucleotides, releasing free uracil.. Excises uracil residues from the DNA which can arise as a result of misincorporation of dUMP residues by DNA polymerase or due to deamination of cytosine. The protein is Uracil-DNA glycosylase of Sulfurimonas denitrificans (strain ATCC 33889 / DSM 1251) (Thiomicrospira denitrificans (strain ATCC 33889 / DSM 1251)).